The following is a 236-amino-acid chain: Probable transcriptional regulatory protein UUR10_0292 (236 aa).

It belongs to the TACO1 family.

Its subcellular location is the cytoplasm. This Ureaplasma urealyticum serovar 10 (strain ATCC 33699 / Western) protein is Probable transcriptional regulatory protein UUR10_0292.